A 366-amino-acid polypeptide reads, in one-letter code: Terpene cyclase-like protein flvF (366 aa).

This sequence belongs to the terpene synthase family. As to quaternary structure, homodimer.

The enzyme catalyses N,N-dimethyl-cadaverine + 2,6,9-trimethyl-13-oxatetracyclo[6.3.1.1(6,9).0(1,5)]tridecane carbocation = pre-flavunoidine + H(+). It functions in the pathway secondary metabolite biosynthesis; terpenoid biosynthesis. Its function is as follows. Terpene cyclase-like protein; part of the gene cluster that mediates the biosynthesis of flavunoidine, an alkaloidal terpenoid with a tetracyclic cage-like core connected to dimethylcadaverine via a C-N bond and acylated with 5,5-dimethyl-L-pipecolate. The tetracyclic core is synthesized by the terpene cyclase flvE and the cytochrome P450 monooxygenase flvD. The terpene cyclase flvE catalyzes the cyclization of farnesyl pyrophosphate (FPP) to form (1R,4R,5S)-(+)-acoradiene and the cytochrome P450 monooxygenase flvD is then responsible for oxidative conversion of (1R,4R,5S)-(+)-acoradiene into the tetracyclic cage present in the final product flavunoidine. In parallel, the N-methyltransferase flvH dimethylates L-lysine to give N,N-dimethyl-L-Lysin which is decarboxylated by flvG to afford dimethylcadaverine. The terpene cyclase-like protein flvF is the enzyme that attaches the dimethylcadaverine precusor at the C-7 of the tetracyclic cage to yield pre-flavunoidine. The cytochrome monooxygenase flvC hydroxylates the C-10 position of pre-flavunoidine whereas the NRPS flvI acylates the terpenoid core at the hydroxylated C-10 with dimethylpipecolate to yield final flavunoidine. The bifunctional enzyme flvA and the dehydrogenase flvB are responsible for the synthesis of the dimethylpipecolate precursor. The PLP-dependent lyase domain of flvA might use L-O-acetyl-homoserine and alpha-keto-isovalerate to form an intermediary ketone that can cyclize intramolecularly to yield an imine. The imine can be reduced by flvB to yield the 6-carboxylated pipecolate. The C-terminal alpha-KG-dependent oxygenase domain of flvA is then proposed to catalyze the decarboxylation to yield dimethylpipecolate. The protein is Terpene cyclase-like protein flvF of Aspergillus flavus (strain ATCC 200026 / FGSC A1120 / IAM 13836 / NRRL 3357 / JCM 12722 / SRRC 167).